The following is a 420-amino-acid chain: Tyrosine--tRNA ligase (420 aa).

Tyr33 contributes to the L-tyrosine binding site. The 'HIGH' region motif lies at 38–47 (PTADSLHIGH). 2 residues coordinate L-tyrosine: Tyr168 and Gln172. A 'KMSKS' region motif is present at residues 231 to 235 (KFGKT). Position 234 (Lys234) interacts with ATP. The S4 RNA-binding domain maps to 353 to 419 (MLLVDALIKV…GKKNYYLVKL (67 aa)).

The protein belongs to the class-I aminoacyl-tRNA synthetase family. TyrS type 1 subfamily. As to quaternary structure, homodimer.

The protein resides in the cytoplasm. The catalysed reaction is tRNA(Tyr) + L-tyrosine + ATP = L-tyrosyl-tRNA(Tyr) + AMP + diphosphate + H(+). Its function is as follows. Catalyzes the attachment of tyrosine to tRNA(Tyr) in a two-step reaction: tyrosine is first activated by ATP to form Tyr-AMP and then transferred to the acceptor end of tRNA(Tyr). The chain is Tyrosine--tRNA ligase from Desulfitobacterium hafniense (strain Y51).